A 105-amino-acid polypeptide reads, in one-letter code: Large ribosomal subunit protein uL24 (105 aa).

It belongs to the universal ribosomal protein uL24 family. As to quaternary structure, part of the 50S ribosomal subunit.

One of two assembly initiator proteins, it binds directly to the 5'-end of the 23S rRNA, where it nucleates assembly of the 50S subunit. Functionally, one of the proteins that surrounds the polypeptide exit tunnel on the outside of the subunit. This chain is Large ribosomal subunit protein uL24, found in Francisella philomiragia subsp. philomiragia (strain ATCC 25017 / CCUG 19701 / FSC 153 / O#319-036).